The chain runs to 347 residues: Holliday junction branch migration complex subunit RuvB (347 aa).

The tract at residues 1–183 (MSEERFVSGH…FGVVLQLQFY (183 aa)) is large ATPase domain (RuvB-L). ATP is bound by residues L22, R23, G64, K67, T68, T69, 130–132 (EDF), R173, Y183, and R220. T68 serves as a coordination point for Mg(2+). The interval 184 to 254 (SEEELTRILM…VADAGLRMMG (71 aa)) is small ATPAse domain (RuvB-S). Residues 257–347 (AMGLDTVDHK…PEGPVQPRLF (91 aa)) form a head domain (RuvB-H) region. DNA is bound by residues R312 and R317.

It belongs to the RuvB family. Homohexamer. Forms an RuvA(8)-RuvB(12)-Holliday junction (HJ) complex. HJ DNA is sandwiched between 2 RuvA tetramers; dsDNA enters through RuvA and exits via RuvB. An RuvB hexamer assembles on each DNA strand where it exits the tetramer. Each RuvB hexamer is contacted by two RuvA subunits (via domain III) on 2 adjacent RuvB subunits; this complex drives branch migration. In the full resolvosome a probable DNA-RuvA(4)-RuvB(12)-RuvC(2) complex forms which resolves the HJ.

The protein localises to the cytoplasm. The catalysed reaction is ATP + H2O = ADP + phosphate + H(+). The RuvA-RuvB-RuvC complex processes Holliday junction (HJ) DNA during genetic recombination and DNA repair, while the RuvA-RuvB complex plays an important role in the rescue of blocked DNA replication forks via replication fork reversal (RFR). RuvA specifically binds to HJ cruciform DNA, conferring on it an open structure. The RuvB hexamer acts as an ATP-dependent pump, pulling dsDNA into and through the RuvAB complex. RuvB forms 2 homohexamers on either side of HJ DNA bound by 1 or 2 RuvA tetramers; 4 subunits per hexamer contact DNA at a time. Coordinated motions by a converter formed by DNA-disengaged RuvB subunits stimulates ATP hydrolysis and nucleotide exchange. Immobilization of the converter enables RuvB to convert the ATP-contained energy into a lever motion, pulling 2 nucleotides of DNA out of the RuvA tetramer per ATP hydrolyzed, thus driving DNA branch migration. The RuvB motors rotate together with the DNA substrate, which together with the progressing nucleotide cycle form the mechanistic basis for DNA recombination by continuous HJ branch migration. Branch migration allows RuvC to scan DNA until it finds its consensus sequence, where it cleaves and resolves cruciform DNA. This is Holliday junction branch migration complex subunit RuvB from Symbiobacterium thermophilum (strain DSM 24528 / JCM 14929 / IAM 14863 / T).